A 230-amino-acid chain; its full sequence is Cyclin-U2-2 (230 aa).

The protein belongs to the cyclin family. Cyclin U/P subfamily. Interacts with CDKA-1. In terms of tissue distribution, expressed in roots and stems. Expressed in the shoot apex, leaf primordia and young leaves.

The chain is Cyclin-U2-2 (CYCU2-2) from Arabidopsis thaliana (Mouse-ear cress).